A 32-amino-acid polypeptide reads, in one-letter code: Photosystem I reaction center subunit XII (32 aa).

The chain crosses the membrane as a helical span at residues 4 to 26 (ISDSQIIVILLSVFITSILALRL).

The protein belongs to the PsaM family.

Its subcellular location is the plastid. The protein resides in the chloroplast thylakoid membrane. This Marchantia polymorpha (Common liverwort) protein is Photosystem I reaction center subunit XII.